The primary structure comprises 653 residues: MELKGVHQQNGTSNGTGAAGTEGESPPPAPAPATAEAAASLETTTEKVDAEQQKTERTNWGNGLEFLMSCISVSVGLGNVWRFPFTAYENGGGAFLIPYIIVLFLIGKPMYYLEMIMGQFTSQGTVKIWSVVPGFVGVGYGQAFATICIITYYSSLLALTLFYLFVSFQSVLPWSYCWEEWMNCVDSRPQEDTDALLLSSSNVTNVTALTDTVKLQSSSELYFLNVVIKEKMDISDGIGDPDWKLTLALFVSWVVIFLVIMRGVKSSGKAAYFLALFPYVVLFILLVRAVTLEGARDGIIFFLEPQWGELLNPTVWKNAVVQCFFSLAVGSGPIIMFASYNRFDHGIYRDAMIVTTLDTLTSLLGGITIFAILGNLAHNLQIENIRDVVRSGTGLAFISYPDAISKFQAVPQLFSVLFFFMLFVLGIGSIVALQSTIVTILCDQFKSWKYWKVALATSICGFLMGLVYVTPGGQWILTLVDFYGGTYVVFILAIFELAGIVWIYGMQNFCDDVEFMCNRRVSLYWRVCWSFFTPVMMIVIFIYSMVTIEPITYSEQFFPEAGNVAGWLLFGIGAAQFPLWWMWYISHHREGSLGQSFVASLRPSDKWGPANPETKRQWVIFKNEKAAQRATKKQSSKMGAFWQKLGHFCGSNT.

The tract at residues 1-55 is disordered; the sequence is MELKGVHQQNGTSNGTGAAGTEGESPPPAPAPATAEAAASLETTTEKVDAEQQKT. The Cytoplasmic portion of the chain corresponds to 1–59; it reads MELKGVHQQNGTSNGTGAAGTEGESPPPAPAPATAEAAASLETTTEKVDAEQQKTERTN. Composition is skewed to low complexity over residues 10–24 and 32–43; these read NGTS…TEGE and PATAEAAASLET. Residues 44-55 show a composition bias toward basic and acidic residues; it reads TTEKVDAEQQKT. 4 helical membrane passes run 60 to 80, 93 to 113, 125 to 145, and 146 to 166; these read WGNG…LGNV, GAFL…MYYL, TVKI…QAFA, and TICI…YLFV. Residues asparagine 202 and asparagine 205 are each glycosylated (N-linked (GlcNAc...) asparagine). The next 9 helical transmembrane spans lie at 241 to 261, 270 to 290, 319 to 339, 353 to 373, 413 to 433, 459 to 479, 486 to 506, 528 to 548, and 565 to 585; these read PDWK…LVIM, AAYF…VRAV, AVVQ…MFAS, IVTT…FAIL, LFSV…IVAL, ICGF…ILTL, TYVV…IYGM, CWSF…MVTI, and AGWL…MWYI.

This sequence belongs to the sodium:neurotransmitter symporter (SNF) (TC 2.A.22) family.

The protein resides in the membrane. In terms of biological role, unusual broad substrate spectrum amino acid:sodium cotransporter that promotes absorption of the D isomers of essential amino acids. Neutral amino acids are the preferred substrates, especially methionine and phenylalanine. The polypeptide is Sodium-dependent nutrient amino acid transporter 1 (Drosophila pseudoobscura pseudoobscura (Fruit fly)).